Reading from the N-terminus, the 294-residue chain is Nucleotide-binding protein Swol_0262 (294 aa).

15-22 (GLSGAGKT) serves as a coordination point for ATP. GTP is bound at residue 65 to 68 (DVRG).

This sequence belongs to the RapZ-like family.

In terms of biological role, displays ATPase and GTPase activities. The protein is Nucleotide-binding protein Swol_0262 of Syntrophomonas wolfei subsp. wolfei (strain DSM 2245B / Goettingen).